We begin with the raw amino-acid sequence, 1444 residues long: MTAKEEEKQERFQLLMTQIGLQDVTTYEEFTKDAKIEKLIADKKNKTWQFHLHVPQIFPAPLFHMMDVGMKRAFSQIAETEMQIVPENQTINETLIQEYWNLIVEPIGKQSPMIGKLLMEQKPTFKEPHFIEVAVHNDMEEATIQQRFQAKIIENYGKAGFPRLAMKMHMLDQSESDEYKAFAQAKQEEDQKKAAEAVQVMQKRQAEGQNGNSSAAPLSGPFQIGYKIKDDEEIKRLGDVYDEERRITVQGLIFATEIRELRSGRSLLQFKITDYTSSMIIKMFSRDNEDAAMFQNLKKGMWVKVRGSVQNDTFVRDLIMMAQDINEIAGVKRLDTAEEKRAELHLHSPMSQMDATSSVDSLFKQAADWGHKAIAITDHSVAQSFPEAYGAGQKYGLKVIFGIEANLIDDGVPIAYNDQHIGLQDATYCVFDVETTGLSAVYDTIIELAGVKMKNGEIIDKFEAFIDPGHPLSATTINLTGITDDMVKGSDPIDVVLKRFKEWSGDDILVAHNASFDMGFINTAYEKVGLEKADNAVVDTLELARFLYPHFKNHRLNTLTKKFNIILEQHHRAVFDAEATAYLAWKLIKDAKEMHDINFHDSLNDYMGEGDAYKRARPFHATIYAQTDVGLKNLFKLITMSNINYFYRVPRIPRSQLKKLREGLIVGTACSQGELFEAMMQKGMQAAEKVVEFYDFIEIQPKPVYAPLIERELVRDEKALEEILKNIVRVGEKAGKPVVATGNVHYKDPVDKIYRKILIHSQGGANPLNRAELPDVHFRSTDEMLKEFAFLGEEKAKEVVVTNSNLVVDWMEELKPIKDELYTPKIDGAEDEVRNMSYDMAHQLYGENLPEIVEARLEKELKSIIGHGFAVIYLISHKLVKKSLVDGYLVGSRGSVGSSFVATMTEITEVNPLPPHYLCPNCKDSEFFDDGSVGSGFDLPDKECPHCGTAYQKEGQDIPFETFLGFKGDKVPDIDLNFSGDYQPVAHAYTKEIFGEDYVFRAGTIGTVAEKTAFGYVRNYERDMNMTIRGAEIDRLVAGCTGVKRTTGQHPGGIIVIPDYMDVYDFTPVQFPADATDSEWKTTHFDFHSIHDNVLKLDILGHDDPTAIRMLQDLSGIDPKTIPTDDPDVMKLFGSTESLGVKPADIDSKTGTLGIPEFGTRFVRQMLEQTKPTTFSELVQISGLSHGTDVWLGNAEELIKNKTCELPDVIGCRDDIMVFLIYQGLESSLAFKIMESVRKGKGLTEEMEEAMMANKVPLWYIESCKKIKYMFPKAHAAAYVLMAVRIAYFKVHYPLYFYATYFTVRADDFDLTSMVNGKEAVKATMKEVNDKGMEASTKEKNLLTVLEIANEMLARGFHFQKVDLYKSSADEFIIDGDSLIPPFNAIPSLGTNVAKQIVAARENGEFLSKEDLQQRGKVSKTIIQYMDDQGCLEGLPDQNQLSLF.

The disordered stretch occupies residues E196–L218. The span at E207–A216 shows a compositional bias: polar residues. Residues Y428–A584 enclose the Exonuclease domain.

Belongs to the DNA polymerase type-C family. PolC subfamily.

It is found in the cytoplasm. The catalysed reaction is DNA(n) + a 2'-deoxyribonucleoside 5'-triphosphate = DNA(n+1) + diphosphate. Required for replicative DNA synthesis. This DNA polymerase also exhibits 3' to 5' exonuclease activity. This chain is DNA polymerase III PolC-type, found in Listeria welshimeri serovar 6b (strain ATCC 35897 / DSM 20650 / CCUG 15529 / CIP 8149 / NCTC 11857 / SLCC 5334 / V8).